The primary structure comprises 292 residues: Putative ribonuclease 3 (292 aa).

An RNase III domain is found at 32 to 158 (LGMSDEYIPY…FFGATEWLID (127 aa)). Positions 204 to 276 (DAKTRFNEVI…ASRALETLAL (73 aa)) constitute a DRBM domain.

Belongs to the IIV-6 142R family.

The catalysed reaction is Endonucleolytic cleavage to 5'-phosphomonoester.. Functionally, digests double-stranded RNA. The sequence is that of Putative ribonuclease 3 from Acheta domesticus (House cricket).